The following is a 353-amino-acid chain: uncharacterized protein (353 aa).

Disordered regions lie at residues 1 to 24 (MSTS…QQSQ), 245 to 280 (NKSS…EKVP), and 305 to 353 (AAGK…DLNN). Low complexity predominate over residues 9–24 (NKKNNTKQQKYQQQSQ). Residues 254–280 (KSGDKSTVKSTDKQVEKKVEESSEKVP) are compositionally biased toward basic and acidic residues. Over residues 321–332 (VTTSTSESTVEV) the composition is skewed to low complexity. Acidic residues predominate over residues 342 to 353 (EPDEEVFEDLNN).

This is an uncharacterized protein from Acanthamoeba polyphaga mimivirus (APMV).